We begin with the raw amino-acid sequence, 304 residues long: Cyclin-dependent kinase 3 (304 aa).

Residues 4-286 (FQKVEKIGEG…AKTALAHPYF (283 aa)) form the Protein kinase domain. ATP contacts are provided by residues 10–18 (IGEGTYGVV) and Lys-33. Catalysis depends on Asp-127, which acts as the Proton acceptor.

The protein belongs to the protein kinase superfamily. CMGC Ser/Thr protein kinase family. CDC2/CDKX subfamily. Interacts with CABLES1 and ATF1. Binding to CCNC/cyclin-C promotes RB1 phosphorylation. Binds to CABLES2.

It catalyses the reaction L-seryl-[protein] + ATP = O-phospho-L-seryl-[protein] + ADP + H(+). The catalysed reaction is L-threonyl-[protein] + ATP = O-phospho-L-threonyl-[protein] + ADP + H(+). Serine/threonine-protein kinase that plays a critical role in the control of the eukaryotic cell cycle; involved in G0-G1 and G1-S cell cycle transitions. Interacts with CCNC/cyclin-C during interphase. Phosphorylates histone H1, ATF1, RB1 and CABLES1. ATF1 phosphorylation triggers ATF1 transactivation and transcriptional activities, and promotes cell proliferation and transformation. CDK3/cyclin-C mediated RB1 phosphorylation is required for G0-G1 transition. Promotes G1-S transition probably by contributing to the activation of E2F1, E2F2 and E2F3 in a RB1-independent manner. This chain is Cyclin-dependent kinase 3 (Cdk3), found in Mus musculus (Mouse).